Here is a 946-residue protein sequence, read N- to C-terminus: Inter-alpha-trypsin inhibitor heavy chain H2 (946 aa).

A signal peptide spans 1 to 18; it reads MQRLACVLIWLFLLEEQA. The propeptide occupies 19 to 54; the sequence is FEIPANEYSEFAGYSNLVELAPDKFPFVQENRRYQR. The VIT domain maps to 56–185; the sequence is LPEESGEMTD…KVQFELHYQE (130 aa). At Ser60 the chain carries Phosphoserine. 2 N-linked (GlcNAc...) asparagine glycosylation sites follow: Asn118 and Asn263. Residues Glu282 and Glu283 each carry the 4-carboxyglutamate modification. One can recognise a VWFA domain in the interval 308 to 468; the sequence is PKNILFVIDV…YDFLKRLSNE (161 aa). Residue Asn445 is glycosylated (N-linked (GlcNAc...) asparagine). Position 466 is a phosphoserine (Ser466). Asn578 carries N-linked (GlcNAc...) asparagine glycosylation. Asp702 carries the aspartate 1-(chondroitin 4-sulfate)-ester modification. A propeptide spanning residues 703 to 946 is cleaved from the precursor; sequence PHFIIYLPKS…PQLYSFLKRP (244 aa). Ser886 is subject to Phosphoserine.

It belongs to the ITIH family. As to quaternary structure, I-alpha-I plasma protease inhibitors are assembled from one or two heavy chains (HC) and one light chain, bikunin. Inter-alpha-inhibitor (I-alpha-I) is composed of ITIH1/HC1, ITIH2/HC2 and bikunin. Heavy chains are linked to bikunin via chondroitin 4-sulfate esterified to the alpha-carboxyl of the C-terminal aspartate after propeptide cleavage. Post-translationally, phosphorylated by FAM20C in the extracellular medium.

The protein localises to the secreted. Its function is as follows. May act as a carrier of hyaluronan in serum or as a binding protein between hyaluronan and other matrix protein, including those on cell surfaces in tissues to regulate the localization, synthesis and degradation of hyaluronan which are essential to cells undergoing biological processes. This Mesocricetus auratus (Golden hamster) protein is Inter-alpha-trypsin inhibitor heavy chain H2 (ITIH2).